Here is a 167-residue protein sequence, read N- to C-terminus: Telethonin (167 aa).

S39 bears the Phosphoserine mark. The disordered stretch occupies residues 142 to 167 (PVVPVSKPGPLRRTLSRSMSQEAQRG). Positions 157–167 (SRSMSQEAQRG) are enriched in polar residues.

Interacts with MYOZ1, MYOZ2 and MYOZ3. Interacts with CSRP3. Interacts directly with the N-terminal Ig-like domains of 2 titin (TTN) molecules. Interacts with ANKRD2; the interaction is direct.

Its subcellular location is the cytoplasm. The protein resides in the myofibril. The protein localises to the sarcomere. Muscle assembly regulating factor. Mediates the antiparallel assembly of titin (TTN) molecules at the sarcomeric Z-disk. This is Telethonin (Tcap) from Mus musculus (Mouse).